The chain runs to 330 residues: Polyprenyl transferase ausN (330 aa).

A run of 5 helical transmembrane segments spans residues Ala116 to Pro136, Leu165 to Pro185, Ile189 to Val209, Ala238 to Leu258, and Val260 to Ala280.

The protein belongs to the UbiA prenyltransferase family. Mg(2+) serves as cofactor.

The protein resides in the membrane. The catalysed reaction is 3,5-dimethylorsellinate + (2E,6E)-farnesyl diphosphate = (3R)-3-farnesyl-6-hydroxy-2,3,5-trimethyl-4-oxocyclohexa-1,5-diene-1-carboxylate + diphosphate + H(+). The protein operates within secondary metabolite biosynthesis; terpenoid biosynthesis. Its function is as follows. Polyprenyl transferase; part of the gene cluster B that mediates the biosynthesis of austinol and dehydroaustinol, two fungal meroterpenoids. The first step of the pathway is the synthesis of 3,5-dimethylorsellinic acid by the polyketide synthase ausA. 3,5-dimethylorsellinic acid is then prenylated by the polyprenyl transferase ausN. Further epoxidation by the FAD-dependent monooxygenase ausM and cyclization by the probable terpene cyclase ausL lead to the formation of protoaustinoid A. Protoaustinoid A is then oxidized to spiro-lactone preaustinoid A3 by the combined action of the FAD-binding monooxygenases ausB and ausC, and the dioxygenase ausE. Acid-catalyzed keto-rearrangement and ring contraction of the tetraketide portion of preaustinoid A3 by ausJ lead to the formation of preaustinoid A4. The aldo-keto reductase ausK, with the help of ausH, is involved in the next step by transforming preaustinoid A4 into isoaustinone which is in turn hydroxylated by the P450 monooxygenase ausI to form austinolide. Finally, the cytochrome P450 monooxygenase ausG modifies austinolide to austinol. Austinol can be further modified to dehydroaustinol which forms a diffusible complex with diorcinol that initiates conidiation. Due to genetic rearrangements of the clusters and the subsequent loss of some enzymes, the end products of the Emericella nidulans austinoid biosynthesis clusters are austinol and dehydroaustinol, even if additional enzymes, such as the O-acetyltransferase ausQ and the cytochrome P450 monooxygenase ausR are still functional. This Emericella nidulans (strain FGSC A4 / ATCC 38163 / CBS 112.46 / NRRL 194 / M139) (Aspergillus nidulans) protein is Polyprenyl transferase ausN.